A 374-amino-acid polypeptide reads, in one-letter code: tRNA-specific 2-thiouridylase MnmA (374 aa).

Residues 13-20 (GMSGGVDS) and methionine 39 contribute to the ATP site. An interaction with target base in tRNA region spans residues 99–101 (NPD). Residue cysteine 104 is the Nucleophile of the active site. Cysteine 104 and cysteine 201 are oxidised to a cystine. Residue glycine 128 participates in ATP binding. An interaction with tRNA region spans residues 151–153 (KDQ). The Cysteine persulfide intermediate role is filled by cysteine 201. Residues 313-314 (RY) are interaction with tRNA.

Belongs to the MnmA/TRMU family.

It localises to the cytoplasm. It carries out the reaction S-sulfanyl-L-cysteinyl-[protein] + uridine(34) in tRNA + AH2 + ATP = 2-thiouridine(34) in tRNA + L-cysteinyl-[protein] + A + AMP + diphosphate + H(+). Catalyzes the 2-thiolation of uridine at the wobble position (U34) of tRNA, leading to the formation of s(2)U34. The chain is tRNA-specific 2-thiouridylase MnmA from Streptococcus equi subsp. equi (strain 4047).